Here is a 602-residue protein sequence, read N- to C-terminus: Elongation factor 4 (602 aa).

A tr-type G domain is found at 5-187; the sequence is DHIRNFSIIA…ALVKRIPAPK (183 aa). Residues 17-22 and 134-137 contribute to the GTP site; these read DHGKST and NKID.

The protein belongs to the TRAFAC class translation factor GTPase superfamily. Classic translation factor GTPase family. LepA subfamily.

It is found in the cell inner membrane. It carries out the reaction GTP + H2O = GDP + phosphate + H(+). In terms of biological role, required for accurate and efficient protein synthesis under certain stress conditions. May act as a fidelity factor of the translation reaction, by catalyzing a one-codon backward translocation of tRNAs on improperly translocated ribosomes. Back-translocation proceeds from a post-translocation (POST) complex to a pre-translocation (PRE) complex, thus giving elongation factor G a second chance to translocate the tRNAs correctly. Binds to ribosomes in a GTP-dependent manner. This Zymomonas mobilis subsp. mobilis (strain ATCC 31821 / ZM4 / CP4) protein is Elongation factor 4.